Reading from the N-terminus, the 477-residue chain is RNA pseudouridine synthase 6, chloroplastic (477 aa).

Residues Met-1–Ser-52 constitute a chloroplast transit peptide. Residues Glu-98–Lys-205 form the S4 RNA-binding domain. Residue Asp-258 is part of the active site.

This sequence belongs to the pseudouridine synthase RluA family.

It is found in the plastid. It localises to the chloroplast. It catalyses the reaction a uridine in RNA = a pseudouridine in RNA. The protein is RNA pseudouridine synthase 6, chloroplastic of Oryza sativa subsp. japonica (Rice).